Reading from the N-terminus, the 458-residue chain is Cytoplasmic tRNA 2-thiolation protein 2 (458 aa).

This sequence belongs to the CTU2/NCS2 family.

The protein localises to the cytoplasm. Its pathway is tRNA modification; 5-methoxycarbonylmethyl-2-thiouridine-tRNA biosynthesis. Plays a central role in 2-thiolation of mcm(5)S(2)U at tRNA wobble positions of tRNA(Lys), tRNA(Glu) and tRNA(Gln). May act by forming a heterodimer with NCS6/CTU1 that ligates sulfur from thiocarboxylated URM1 onto the uridine of tRNAs at wobble position. The chain is Cytoplasmic tRNA 2-thiolation protein 2 from Arabidopsis thaliana (Mouse-ear cress).